The following is a 431-amino-acid chain: Galactose-3-O-sulfotransferase 3 (431 aa).

The Cytoplasmic portion of the chain corresponds to 1 to 19 (MPPILQRLQQATKMMSRRK). Residues 20–40 (ILLLVLGCSTVSLLIHQGAQL) form a helical; Signal-anchor for type II membrane protein membrane-spanning segment. The Lumenal segment spans residues 41–431 (SWYPKLFPLS…RVLPRGPQGP (391 aa)). Residues Asn91, Asn110, Asn177, and Asn302 are each glycosylated (N-linked (GlcNAc...) asparagine). The interval 399–431 (QKRRGGARARPEPVLDNPPPRPIRVLPRGPQGP) is disordered.

It belongs to the galactose-3-O-sulfotransferase family. It depends on Mg(2+) as a cofactor. Highly expressed in thyroid, brain, kidney, heart and spinal cord.

The protein resides in the golgi apparatus. The protein localises to the golgi stack membrane. It functions in the pathway protein modification; carbohydrate sulfation. In terms of biological role, transfers a sulfate to position 3 of non-reducing beta-galactosyl residues in N-glycans and core2-branched O-glycans. Has high activity towards Gal-beta-1,4-GlcNAc, Gal-beta-1,4(Fuc-alpha-1,3)GlcNAc and lower activity towards Gal-beta-1,3(Fuc-alpha-1,4)GlcNAc. The polypeptide is Galactose-3-O-sulfotransferase 3 (GAL3ST3) (Homo sapiens (Human)).